The sequence spans 195 residues: Imidazoleglycerol-phosphate dehydratase (195 aa).

This sequence belongs to the imidazoleglycerol-phosphate dehydratase family.

The protein resides in the cytoplasm. It catalyses the reaction D-erythro-1-(imidazol-4-yl)glycerol 3-phosphate = 3-(imidazol-4-yl)-2-oxopropyl phosphate + H2O. It participates in amino-acid biosynthesis; L-histidine biosynthesis; L-histidine from 5-phospho-alpha-D-ribose 1-diphosphate: step 6/9. In Acetivibrio thermocellus (strain ATCC 27405 / DSM 1237 / JCM 9322 / NBRC 103400 / NCIMB 10682 / NRRL B-4536 / VPI 7372) (Clostridium thermocellum), this protein is Imidazoleglycerol-phosphate dehydratase.